The chain runs to 442 residues: 3-ketoacyl-CoA thiolase (442 aa).

Cys-105 (acyl-thioester intermediate) is an active-site residue. Catalysis depends on proton acceptor residues His-398 and Cys-428.

Belongs to the thiolase-like superfamily. Thiolase family. Heterotetramer of two alpha chains (FadJ) and two beta chains (FadI).

It localises to the cytoplasm. It carries out the reaction an acyl-CoA + acetyl-CoA = a 3-oxoacyl-CoA + CoA. It participates in lipid metabolism; fatty acid beta-oxidation. In terms of biological role, catalyzes the final step of fatty acid oxidation in which acetyl-CoA is released and the CoA ester of a fatty acid two carbons shorter is formed. The polypeptide is 3-ketoacyl-CoA thiolase (Aliivibrio fischeri (strain MJ11) (Vibrio fischeri)).